The sequence spans 265 residues: 6-carboxyhexanoate--CoA ligase (265 aa).

It belongs to the BioW family. As to quaternary structure, homodimer. The cofactor is Mg(2+).

It catalyses the reaction heptanedioate + ATP + CoA = 6-carboxyhexanoyl-CoA + AMP + diphosphate. It participates in metabolic intermediate metabolism; pimeloyl-CoA biosynthesis; pimeloyl-CoA from pimelate: step 1/1. Functionally, catalyzes the transformation of pimelate into pimeloyl-CoA with concomitant hydrolysis of ATP to AMP. In Syntrophotalea carbinolica (strain DSM 2380 / NBRC 103641 / GraBd1) (Pelobacter carbinolicus), this protein is 6-carboxyhexanoate--CoA ligase.